The primary structure comprises 105 residues: Phosphoribosyl-AMP cyclohydrolase (105 aa).

Asp-72 is a Mg(2+) binding site. Residue Cys-73 participates in Zn(2+) binding. The Mg(2+) site is built by Asp-74 and Asp-76. Residues Cys-89 and Cys-96 each coordinate Zn(2+).

The protein belongs to the PRA-CH family. In terms of assembly, homodimer. It depends on Mg(2+) as a cofactor. The cofactor is Zn(2+).

The protein resides in the cytoplasm. The enzyme catalyses 1-(5-phospho-beta-D-ribosyl)-5'-AMP + H2O = 1-(5-phospho-beta-D-ribosyl)-5-[(5-phospho-beta-D-ribosylamino)methylideneamino]imidazole-4-carboxamide. Its pathway is amino-acid biosynthesis; L-histidine biosynthesis; L-histidine from 5-phospho-alpha-D-ribose 1-diphosphate: step 3/9. In terms of biological role, catalyzes the hydrolysis of the adenine ring of phosphoribosyl-AMP. The sequence is that of Phosphoribosyl-AMP cyclohydrolase from Listeria innocua serovar 6a (strain ATCC BAA-680 / CLIP 11262).